We begin with the raw amino-acid sequence, 268 residues long: Ribonuclease P protein subunit p30 (268 aa).

A2 carries the N-acetylalanine modification. The disordered stretch occupies residues 247-268 (KPRPSEGDEDCLPASKKAKCEG). Phosphoserine is present on S251.

Belongs to the eukaryotic/archaeal RNase P protein component 3 family. In terms of assembly, component of nuclear RNase P and RNase MRP ribonucleoproteins. RNase P consists of a catalytic RNA moiety and about 10 protein subunits; POP1, POP4, POP5, POP7, RPP14, RPP21, RPP25, RPP30, RPP38 and RPP40. Within the RNase P complex, POP1, POP7 and RPP25 form the 'finger' subcomplex, POP5, RPP14, RPP40 and homodimeric RPP30 form the 'palm' subcomplex, and RPP21, POP4 and RPP38 form the 'wrist' subcomplex. All subunits of the RNase P complex interact with the catalytic RNA. Several subunits of RNase P are also part of the RNase MRP complex. RNase MRP consists of a catalytic RNA moiety and about 8 protein subunits; POP1, POP7, RPP25, RPP30, RPP38, RPP40 and possibly also POP4 and POP5.

It is found in the nucleus. Its subcellular location is the nucleolus. Its function is as follows. Component of ribonuclease P, a ribonucleoprotein complex that generates mature tRNA molecules by cleaving their 5'-ends. Also a component of the MRP ribonuclease complex, which cleaves pre-rRNA sequences. In Homo sapiens (Human), this protein is Ribonuclease P protein subunit p30 (RPP30).